Reading from the N-terminus, the 968-residue chain is MPFTLGQRWISDTESELGLGTVVAMDARTVTLLFPSTGENRLYARSDSPVTRVMFNPGDTITSHEGWQLHIDEVKEENGLLVYVGTRLDTEETNVTLREVLLDSKLVFSKPQDRLFAGQIDRMDRFALRYRARKFQSEQYRMPYSGLRGQRTNLIPHQLNIAHDVGRRHAPRVLLADEVGLGKTIEAGMILHQQLLSGAAERVLIIVPETLQHQWLVEMLRRFNLRFALFDDERYTEAQHDAYNPFETEQLVICSLDFARRNKQRLEHLCDAEWDLLVVDEAHHLVWSTDAPSREYMAIEQLAERVPGVLLLTATPEQLGMESHFARLRLLDPNRFHDFEQFVEEQKNYRPVADAVAMLLAGNKLSNDELNRLGDLIGEQDIEPLLQAANSDRDDAQAARDELVSMLMDRHGTSRVLFRNTRNGVKGFPKRELHTVKLPLPTQYQTAIKVSGIMGARKSAEDRARDMLYPEQIYQEFEGDTGTWWNFDPRVEWLMGYLTSHRSQKVLVICAKATTALQLEQVLREREGIRAAVFHEGMSIIERDRAAAWFAEEDTGAQVLLCSEIGSEGRNFQFASNLVMFDLPFNPDLLEQRIGRLDRIGQAHDIQIHVPYLEKTAQSVLVRWYHEGLDAFEHTCPTGRAIYDSAYASLINYLAAPEETDGFDDLIKSCREQHEALKAQLEQGRDRLLEINSNGGEKAQQLAQSIEEQDDDTNLIAFAMNLFDIVGINQDDRGDNLIVLTPSDHMLVPDFPGLPEDGCTITFERDVALSREDAQFITWEHPLIRNGLDLILSGDTGSSTISLLKNKALPVGTLLVELVYVVEAQAPKQLQLNRFLPPTPVRMLLDKNGNNLAAQVEFETFNRQLSAVNRHTGSKLVNAVQQDVHAILQLGETQIEQSARALIDNARREADEKLSGELSRLEALRAVNPNIRDDELAAIDSNRQQVLESLNQAGWRLDALRLIVVTHQ.

The 171-residue stretch at 164–334 (DVGRRHAPRV…FARLRLLDPN (171 aa)) folds into the Helicase ATP-binding domain. 177–184 (DEVGLGKT) contacts ATP. The DEAH box signature appears at 280–283 (DEAH). Residues 490 to 685 (RVEWLMGYLT…ALKAQLEQGR (196 aa)) enclose the Helicase C-terminal domain.

The protein belongs to the SNF2/RAD54 helicase family. RapA subfamily. As to quaternary structure, interacts with the RNAP. Has a higher affinity for the core RNAP than for the holoenzyme. Its ATPase activity is stimulated by binding to RNAP.

Its function is as follows. Transcription regulator that activates transcription by stimulating RNA polymerase (RNAP) recycling in case of stress conditions such as supercoiled DNA or high salt concentrations. Probably acts by releasing the RNAP, when it is trapped or immobilized on tightly supercoiled DNA. Does not activate transcription on linear DNA. Probably not involved in DNA repair. The sequence is that of RNA polymerase-associated protein RapA from Salmonella typhi.